The chain runs to 440 residues: Protein disulfide-isomerase A6 (440 aa).

Residues 1–19 (MARLVLGLVSCTFFLAVSG) form the signal peptide. Thioredoxin domains lie at 20–133 (LYSS…ALRQ) and 151–287 (QGRG…EDIA). C55 and C58 are joined by a disulfide. S129, S156, and S158 each carry phosphoserine. Residues 139-161 (LGGRSGGYSSGKQGRGDSSSKKD) form a disordered region. The segment covering 152–161 (GRGDSSSKKD) has biased composition (basic and acidic residues). Residues C190 and C193 are joined by a disulfide bond. Residues 399-440 (GGGSFPTITPREPWDGKDGELPVEDDIDLSDVELDDLEKDEL) are disordered. Acidic residues predominate over residues 419–440 (LPVEDDIDLSDVELDDLEKDEL). A Phosphoserine modification is found at S428. A Prevents secretion from ER motif is present at residues 437-440 (KDEL).

The protein belongs to the protein disulfide isomerase family. As to quaternary structure, part of a large chaperone multiprotein complex comprising DNAJB11, HSP90B1, HSPA5, HYOU, PDIA2, PDIA4, PDIA6, PPIB, SDF2L1, UGGT1 and very small amounts of ERP29, but not, or at very low levels, CALR nor CANX. Interacts with MICA on the surface of tumor cells, leading to MICA disulfide bond reduction which is required for its release from tumor cells. Interacts with ITGB3 following platelet stimulation. Interacts with ERN1; the interaction is direct. Interacts with EIF2AK3.

Its subcellular location is the endoplasmic reticulum lumen. The protein localises to the cell membrane. It is found in the melanosome. The catalysed reaction is Catalyzes the rearrangement of -S-S- bonds in proteins.. In terms of biological role, may function as a chaperone that inhibits aggregation of misfolded proteins. Negatively regulates the unfolded protein response (UPR) through binding to UPR sensors such as ERN1, which in turn inactivates ERN1 signaling. May also regulate the UPR via the EIF2AK3 UPR sensor. Plays a role in platelet aggregation and activation by agonists such as convulxin, collagen and thrombin. This is Protein disulfide-isomerase A6 (Pdia6) from Mus musculus (Mouse).